A 178-amino-acid polypeptide reads, in one-letter code: Caveolin-1 (178 aa).

Serine 2 is modified (N-acetylserine). Phosphoserine is present on serine 2. Positions 2 to 94 (SGGKYVDSEG…WKASFTTFTV (93 aa)) are required for homooligomerization. At 2 to 104 (SGGKYVDSEG…TKYWFYRLLS (103 aa)) the chain is on the cytoplasmic side. Lysine 5 carries the N6-acetyllysine; alternate modification. Residue lysine 5 forms a Glycyl lysine isopeptide (Lys-Gly) (interchain with G-Cter in ubiquitin); alternate linkage. Phosphotyrosine is present on tyrosine 6. Phosphoserine is present on serine 9. Tyrosine 14 is modified (phosphotyrosine; by ABL1). Tyrosine 25 carries the phosphotyrosine modification. Glycyl lysine isopeptide (Lys-Gly) (interchain with G-Cter in ubiquitin) cross-links involve residues lysine 26, lysine 39, lysine 47, and lysine 57. An interaction with CAVIN3 region spans residues 82–94 (DGIWKASFTTFTV). Positions 105 to 125 (ALFGIPMALIWGIYFAILSFL) form an intramembrane region, helical. Topologically, residues 126-178 (HIWAVVPCIKSFLIEIQCISRVYSIYVHTFCDPLFEAIGKIFSSIRINMQKEI) are cytoplasmic. An interacts with SPRY1, SPRY2, SPRY3 and SPRY4 region spans residues 131-142 (VPCIKSFLIEIQ). S-palmitoyl cysteine attachment occurs at residues cysteine 133, cysteine 143, and cysteine 156. An interacts with SPRY1, SPRY2, and SPRY4 region spans residues 149–160 (SIYVHTFCDPLF). Positions 167-178 (FSSIRINMQKEI) are interacts with SPRY1, SPRY2, SPRY3 and SPRY4.

It belongs to the caveolin family. As to quaternary structure, homooligomer. Interacts with GLIPR2. Interacts with NOSTRIN. Interacts with SNAP25 and STX1A. Interacts (via the N-terminus) with DPP4; the interaction is direct. Interacts with CTNNB1, CDH1 and JUP. Interacts with PACSIN2; this interaction induces membrane tubulation. Interacts with SLC7A9. Interacts with BMX and BTK. Interacts with TGFBR1. Interacts with CAVIN3 (via leucine-zipper domain) in a cholesterol-sensitive manner. Interacts with CAVIN1. Interacts with EHD2 in a cholesterol-dependent manner. Forms a ternary complex with UBXN6 and VCP; mediates CAV1 targeting to lysosomes for degradation. Interacts with ABCG1; this interaction regulates ABCG1-mediated cholesterol efflux. Interacts with NEU3; this interaction enhances NEU3 sialidase activity within caveola. Interacts (via C-terminus) with SPRY1, SPRY2 (via C-terminus), SPRY3, and SPRY4. Interacts with IGFBP5; this interaction allows trafficking of IGFBP5 from the plasma membrane to the nucleus. In terms of processing, phosphorylated at Tyr-14 by ABL1 in response to oxidative stress. Post-translationally, ubiquitinated. Undergo monoubiquitination and multi- and/or polyubiquitination. Monoubiquitination of N-terminal lysines promotes integration in a ternary complex with UBXN6 and VCP which promotes oligomeric CAV1 targeting to lysosomes for degradation. Ubiquitinated by ZNRF1; leading to degradation and modulation of the TLR4-mediated immune response.

It is found in the golgi apparatus membrane. The protein resides in the cell membrane. It localises to the membrane. Its subcellular location is the caveola. The protein localises to the membrane raft. In terms of biological role, may act as a scaffolding protein within caveolar membranes. Forms a stable heterooligomeric complex with CAV2 that targets to lipid rafts and drives caveolae formation. Mediates the recruitment of CAVIN proteins (CAVIN1/2/3/4) to the caveolae. Interacts directly with G-protein alpha subunits and can functionally regulate their activity. Involved in the costimulatory signal essential for T-cell receptor (TCR)-mediated T-cell activation. Its binding to DPP4 induces T-cell proliferation and NF-kappa-B activation in a T-cell receptor/CD3-dependent manner. Recruits CTNNB1 to caveolar membranes and may regulate CTNNB1-mediated signaling through the Wnt pathway. Negatively regulates TGFB1-mediated activation of SMAD2/3 by mediating the internalization of TGFBR1 from membrane rafts leading to its subsequent degradation. Binds 20(S)-hydroxycholesterol (20(S)-OHC). This is Caveolin-1 (CAV1) from Loxodonta africana (African elephant).